The sequence spans 262 residues: 3-methyl-2-oxobutanoate hydroxymethyltransferase (262 aa).

Mg(2+)-binding residues include Asp43 and Asp82. 3-methyl-2-oxobutanoate contacts are provided by residues Asp43–Ser44, Asp82, and Lys111. A Mg(2+)-binding site is contributed by Glu113. The active-site Proton acceptor is Glu180.

This sequence belongs to the PanB family. As to quaternary structure, homodecamer; pentamer of dimers. It depends on Mg(2+) as a cofactor.

The protein localises to the cytoplasm. The catalysed reaction is 3-methyl-2-oxobutanoate + (6R)-5,10-methylene-5,6,7,8-tetrahydrofolate + H2O = 2-dehydropantoate + (6S)-5,6,7,8-tetrahydrofolate. The protein operates within cofactor biosynthesis; coenzyme A biosynthesis. Its function is as follows. Catalyzes the reversible reaction in which hydroxymethyl group from 5,10-methylenetetrahydrofolate is transferred onto alpha-ketoisovalerate to form ketopantoate. The polypeptide is 3-methyl-2-oxobutanoate hydroxymethyltransferase (Pyrobaculum aerophilum (strain ATCC 51768 / DSM 7523 / JCM 9630 / CIP 104966 / NBRC 100827 / IM2)).